The following is a 419-amino-acid chain: MGRKSNESCSSSLHVSSISQENHSQWNLDAEELFDEKETFSSENDGAAGGKTNKSHLENPAEQLILQLTVSEHAHSRSQQNSSQGVFQLWSSPVNKGSTVDKRNSSVEENVTDESDLSENEKMNDSLLSYFKKMDLNLKPETIEHVERPFPEEAGQVPVYADFLPAPFNTLDLHRFAFSKCESWKAAVEPPESSIERLILRLLELERLQHMTIQRERPRLQSTFYSSMFSMAERPSSSKAIATKAKAPKIPETSTLQTSGVDKNRDKRKNNSGSGKPEQNVSKWSLSSAGKSKSNSRALLKCSSTSKQCAVAHDDLKNSKNSSLNPCQEPPLKPTTTTQATQPMARVVSRCLPPRSPMPVSPIPLSFPENPREEGKVPRTKKKCHRKSILLNRAFYIQKRNCLSPSLIARGKCSPTDQK.

4 disordered regions span residues Met1–Pro60, Lys96–Glu119, Ser236–Leu299, and Lys317–Lys382. Low complexity predominate over residues Glu7–Ser19. The segment covering Ser236 to Pro251 has biased composition (low complexity). Polar residues-rich tracts occupy residues Glu252–Val261 and Asn271–Val281. Low complexity-rich tracts occupy residues Ser282–Ser296 and Pro334–Ala345.

This sequence belongs to the FAM217 family.

The protein is Protein FAM217A (Fam217a) of Mus musculus (Mouse).